Consider the following 152-residue polypeptide: Transmembrane protein 35B (152 aa).

An N-terminal signal peptide occupies residues 1-21 (MLVSLGALRVLLGIFFTLTGA). The next 3 membrane-spanning stretches (helical) occupy residues 62 to 82 (AAVGWLELLAGLLLVVGPPVL), 85 to 105 (ISNVLLILLMMGAVFTLVVLE), and 111 to 131 (YIPAVVCLGLLLLLDSCQFLV).

Belongs to the DoxX family.

Its subcellular location is the membrane. The protein is Transmembrane protein 35B of Rattus norvegicus (Rat).